The sequence spans 369 residues: Flagellar P-ring protein 1 (369 aa).

The signal sequence occupies residues 1–23 (MRKQSLVTLLMVLLSLVWLPASA).

Belongs to the FlgI family. The basal body constitutes a major portion of the flagellar organelle and consists of four rings (L,P,S, and M) mounted on a central rod.

The protein localises to the periplasm. The protein resides in the bacterial flagellum basal body. Functionally, assembles around the rod to form the L-ring and probably protects the motor/basal body from shearing forces during rotation. The chain is Flagellar P-ring protein 1 from Yersinia pseudotuberculosis serotype I (strain IP32953).